Here is a 727-residue protein sequence, read N- to C-terminus: Catalase-peroxidase (727 aa).

Positions 1-21 (MDAKVEDNIAGKCPMGHGRGP) are disordered. The tryptophyl-tyrosyl-methioninium (Trp-Tyr) (with M-243) cross-link spans 95–217 (WHAAGTYRIT…LGAVQMGLIY (123 aa)). His-96 serves as the catalytic Proton acceptor. Positions 217–243 (YVNPEGPNGNPDPLASARDIRETFARM) form a cross-link, tryptophyl-tyrosyl-methioninium (Tyr-Met) (with W-95). Residue His-258 coordinates heme b.

Belongs to the peroxidase family. Peroxidase/catalase subfamily. As to quaternary structure, homodimer or homotetramer. Heme b serves as cofactor. Post-translationally, formation of the three residue Trp-Tyr-Met cross-link is important for the catalase, but not the peroxidase activity of the enzyme.

The enzyme catalyses H2O2 + AH2 = A + 2 H2O. It catalyses the reaction 2 H2O2 = O2 + 2 H2O. Functionally, bifunctional enzyme with both catalase and broad-spectrum peroxidase activity. Important for stationary phase survival. This is Catalase-peroxidase from Caulobacter vibrioides (strain ATCC 19089 / CIP 103742 / CB 15) (Caulobacter crescentus).